A 344-amino-acid chain; its full sequence is Probable Delta(7)-sterol 5(6)-desaturase (344 aa).

The next 3 membrane-spanning stretches (helical) occupy residues 76–96, 123–143, and 160–180; these read LSLF…FASL, QTNA…VAEV, and WYDF…IYWI. One can recognise a Fatty acid hydroxylase domain in the interval 167-292; sequence PLFIMFTDFG…FTTLWDRLGG (126 aa). The Histidine box-1 motif lies at 181-185; sequence HRGLH. The Histidine box-2 motif lies at 194–198; it reads HKPHH. The chain crosses the membrane as a helical span at residues 224-244; sequence HIFPFIFPLQKMAYVGLFVFI. Positions 269–273 match the Histidine box-3 motif; that stretch reads HSVHH.

It belongs to the sterol desaturase family. Fe cation is required as a cofactor.

The protein localises to the endoplasmic reticulum membrane. The catalysed reaction is a Delta(7)-sterol + 2 Fe(II)-[cytochrome b5] + O2 + 2 H(+) = a Delta(5),Delta(7)-sterol + 2 Fe(III)-[cytochrome b5] + 2 H2O. The protein operates within steroid metabolism; ergosterol biosynthesis; ergosterol from zymosterol: step 3/5. Catalyzes the introduction of a C-5 double bond in the B ring of ergosterol. May contribute to the regulation of ergosterol biosynthesis. This is Probable Delta(7)-sterol 5(6)-desaturase from Neurospora crassa (strain ATCC 24698 / 74-OR23-1A / CBS 708.71 / DSM 1257 / FGSC 987).